Reading from the N-terminus, the 413-residue chain is Glucose-1-phosphate adenylyltransferase (413 aa).

Alpha-D-glucose 1-phosphate contacts are provided by residues G163, 179 to 180, and S197; that span reads EK.

It belongs to the bacterial/plant glucose-1-phosphate adenylyltransferase family. Homotetramer.

The enzyme catalyses alpha-D-glucose 1-phosphate + ATP + H(+) = ADP-alpha-D-glucose + diphosphate. Its pathway is glycan biosynthesis; glycogen biosynthesis. In terms of biological role, involved in the biosynthesis of ADP-glucose, a building block required for the elongation reactions to produce glycogen. Catalyzes the reaction between ATP and alpha-D-glucose 1-phosphate (G1P) to produce pyrophosphate and ADP-Glc. The polypeptide is Glucose-1-phosphate adenylyltransferase (Parafrankia sp. (strain EAN1pec)).